The primary structure comprises 304 residues: D-alanine--D-alanine ligase (304 aa).

An ATP-grasp domain is found at 101 to 298 (KKIFIKNKIL…FIKLIEWILK (198 aa)). 131–184 (EKNLKFPVVVKPINEGSSVHVYICDKTNILKNLKVLKSYNEILIEEFIPGREIQ) contributes to the ATP binding site. The Mg(2+) site is built by Asp253, Glu265, and Asn267.

This sequence belongs to the D-alanine--D-alanine ligase family. Mg(2+) is required as a cofactor. Mn(2+) serves as cofactor.

It is found in the cytoplasm. The catalysed reaction is 2 D-alanine + ATP = D-alanyl-D-alanine + ADP + phosphate + H(+). Its pathway is cell wall biogenesis; peptidoglycan biosynthesis. In terms of biological role, cell wall formation. The sequence is that of D-alanine--D-alanine ligase from Pelagibacter ubique (strain HTCC1062).